We begin with the raw amino-acid sequence, 257 residues long: uncharacterized protein (257 aa).

7–14 (GKGGVGKT) contacts ATP.

To M.jannaschii MJ0084 and MJ0685.

This is an uncharacterized protein from Methanocaldococcus jannaschii (strain ATCC 43067 / DSM 2661 / JAL-1 / JCM 10045 / NBRC 100440) (Methanococcus jannaschii).